A 322-amino-acid polypeptide reads, in one-letter code: DNA repair and recombination protein RadA (322 aa).

105–112 (GMYGSGKT) lines the ATP pocket.

The protein belongs to the eukaryotic RecA-like protein family.

Its function is as follows. Involved in DNA repair and in homologous recombination. Binds and assemble on single-stranded DNA to form a nucleoprotein filament. Hydrolyzes ATP in a ssDNA-dependent manner and promotes DNA strand exchange between homologous DNA molecules. The polypeptide is DNA repair and recombination protein RadA (Methanococcus maripaludis (strain C7 / ATCC BAA-1331)).